The sequence spans 121 residues: UPF0102 protein Dhaf_3740 (121 aa).

Belongs to the UPF0102 family.

The sequence is that of UPF0102 protein Dhaf_3740 from Desulfitobacterium hafniense (strain DSM 10664 / DCB-2).